A 2126-amino-acid chain; its full sequence is Serine/threonine-protein kinase WNK1 (2126 aa).

2 disordered regions span residues 1-80 and 93-202; these read MSDG…FFRR and LPGL…QQQD. Residue Ser17 is modified to Phosphoserine. Residues 48 to 64 show a composition bias toward basic and acidic residues; sequence RTEEYRRRRHTMDKDSR. At Thr58 the chain carries Phosphothreonine. Composition is skewed to low complexity over residues 101–111 and 127–141; these read PQPSVPAVVPQ and VASQVSQQPSAAASP. 2 positions are modified to phosphoserine: Ser165 and Ser172. In terms of domain architecture, Protein kinase spans 221-479; the sequence is LKFDIEIGRG…IKDLLNHAFF (259 aa). Ser231 contacts ATP. Chloride is bound by residues Phe283 and Leu299. Residues 301-304 and Lys351 contribute to the ATP site; that span reads TELM. Asp368 (proton acceptor) is an active-site residue. Chloride contacts are provided by Leu369 and Leu371. 2 positions are modified to phosphoserine; by autocatalysis: Ser378 and Ser382. Residues 488 to 555 form an autoinhibitory domain region; it reads ELAEEDDGEK…VCEGDHKTMA (68 aa). Residues 573-588 show a composition bias toward basic and acidic residues; sequence QLVREEQEKRKQEESS. The segment at 573–865 is disordered; that stretch reads QLVREEQEKR…SRHEKTSRPK (293 aa). Residues 593–614 are compositionally biased toward polar residues; sequence NEQQASVSQAGIQPLSVASTGI. Positions 615–626 are enriched in low complexity; sequence PTAPTTSASVST. An interaction with KLHL3 region spans residues 629–639; that stretch reads EPEEPEADQHQ. 3 stretches are compositionally biased toward polar residues: residues 638–682, 695–705, and 713–733; these read HQQL…GSQH, TVSSIQAQSQP, and SMAQGQNQGQPSSSLAGVLSS. Residues 734–746 are compositionally biased toward low complexity; that stretch reads QPVQHPQQQGIQP. Polar residues predominate over residues 750–789; it reads PQQAVQYSLPQAASSSEGTVQPVSQPQVSAGTQSSTQGVS. A compositionally biased stretch (low complexity) spans 793–823; sequence PPEQTPITQSQPTQPVPLVSSVDSAHSDVAS. The span at 826 to 836 shows a compositional bias: polar residues; the sequence is SDGNENAPSSS. Positions 844–865 are enriched in basic residues; sequence TKRHYRKSVRSRSRHEKTSRPK. The RFXV motif 1 motif lies at 1003 to 1006; that stretch reads RFIV. The residue at position 1007 (Ser1007) is a Phosphoserine. 2 disordered regions span residues 1474–1507 and 1557–1595; these read GQVSTPGTHASAPASTATGAKPGTTPPKPSLTKT and IPVTPAVGPLSTMSSTAVTEAGSQPQKDGTEVHVTASSS. Low complexity predominate over residues 1477 to 1496; it reads STPGTHASAPASTATGAKPG. Over residues 1567–1583 the composition is skewed to polar residues; sequence STMSSTAVTEAGSQPQK. The RFXV motif 2 signature appears at 1604–1607; that stretch reads RFQV. Residues 1610 to 1695 form a disordered region; the sequence is TMDDAQKERK…TKVGRFQVTT (86 aa). Positions 1613–1629 are enriched in basic and acidic residues; it reads DAQKERKNRSEDTKSVH. Positions 1632–1650 are enriched in low complexity; it reads SSTSESSVLSSSSPESTLV. 2 short sequence motifs (RFXV motif) span residues 1690–1693 and 1702–1705; these read RFQV and RFSV. Positions 1709–1719 are enriched in basic and acidic residues; that stretch reads EDKVTELKKEG. Disordered regions lie at residues 1709-1783, 1856-1940, and 1952-1990; these read EDKV…LCSK, VIIP…NLYS, and SLSAPGQGTSSTNTVGGTVSSQAAQAQPPAMTSSRKGTF. The residue at position 1723 (Ser1723) is a Phosphoserine. The span at 1738-1747 shows a compositional bias: basic and acidic residues; that stretch reads PKKEKPELAE. Ser1755, Ser1756, Ser1771, Ser1773, Ser1776, and Ser1865 each carry phosphoserine. Positions 1866 to 1878 are enriched in basic residues; the sequence is GRRRRPTKSKGSK. A compositionally biased stretch (low complexity) spans 1879–1889; the sequence is SSRSSSLGNKS. Positions 1890-1940 are enriched in polar residues; that stretch reads PQLSGNLSGQSGTSVLNPQQTLHPPGNTPETGHNQLLQPLKPSPSSDNLYS. Low complexity predominate over residues 1957 to 1981; sequence GQGTSSTNTVGGTVSSQAAQAQPPA. The interval 1985-2005 is amphipathic alpha-helix; the sequence is SRKGTFTDDLHKLVDNWARDA. Residues Ser2014 and Ser2030 each carry the phosphoserine modification. The segment at 2076–2097 is disordered; that stretch reads PFGTQWSGTGGPAPQPLGQFQP. Phosphoserine is present on residues Ser2114 and Ser2116.

The protein belongs to the protein kinase superfamily. Ser/Thr protein kinase family. WNK subfamily. As to quaternary structure, interacts with WNK3. Interacts with WNK4; inhibiting the activity of WNK4. Interacts with SGK1; promoting its activation. Associates with the mTORC2 complex. Interacts with UVRAG. Interacts (via amphipathic alpha-helix region) with EMC2; promoting the ER membrane protein complex assembly. In terms of assembly, interacts with isoform 1; inhibiting isoform 1 activity. Mg(2+) is required as a cofactor. Post-translationally, autophosphorylated at Ser-378 and Ser-382, promoting its activity. Autophosphorylation at Ser-382 is inhibited by intracellular calcium. Phosphorylation at Thr-58 increases ability to activate SGK1. Ubiquitinated by the BCR(KLHL3) complex, leading to its degradation. Also ubiquitinated by the BCR(KLHL2) complex. In terms of processing, may be O-glycosylated.

The protein resides in the cytoplasm. It is found in the nucleus. Its subcellular location is the cytoskeleton. It localises to the spindle. The catalysed reaction is L-seryl-[protein] + ATP = O-phospho-L-seryl-[protein] + ADP + H(+). The enzyme catalyses L-threonyl-[protein] + ATP = O-phospho-L-threonyl-[protein] + ADP + H(+). With respect to regulation, activated in response to hyperosmotic stress: cell shrinkage promotes formation of a membraneless compartment that concentrates WNK1 with its substrates, OXSR1/OSR1 and STK39/SPAK. Activation requires autophosphorylation of Ser-382 and, to a lower extent, Ser-378. Autophosphorylation and subsequent activation is inhibited by increases in intracellular ionic strength: Cl(-) potently inhibits WNK1 kinase activity via direct binding. Also inhibited by K(+) ions. Inhibited by Compound 12 ((5-Chloro-2-(2-((methyl-d3)amino)thiazol-4-yl)- pyridin-4-yl)(4-(4-chlorobenzyl)piperazin-1-yl)methanone). In terms of biological role, serine/threonine-protein kinase component of the WNK1-SPAK/OSR1 kinase cascade, which acts as a key regulator of blood pressure and regulatory volume increase by promoting ion influx. WNK1 mediates regulatory volume increase in response to hyperosmotic stress by acting as a molecular crowding sensor, which senses cell shrinkage and mediates formation of a membraneless compartment by undergoing liquid-liquid phase separation. The membraneless compartment concentrates WNK1 with its substrates, OXSR1/OSR1 and STK39/SPAK, promoting WNK1-dependent phosphorylation and activation of downstream kinases OXSR1/OSR1 and STK39/SPAK. Following activation, OXSR1/OSR1 and STK39/SPAK catalyze phosphorylation of ion cotransporters SLC12A1/NKCC2, SLC12A2/NKCC1, SLC12A5/KCC2 and SLC12A6/KCC3, regulating their activity. Phosphorylation of Na-K-Cl cotransporters SLC12A2/NKCC1 and SLC12A2/NKCC1 promote their activation and ion influx; simultaneously, phosphorylation of K-Cl cotransporters SLC12A5/KCC2 and SLC12A6/KCC3 inhibit their activity, blocking ion efflux. Also acts as a regulator of angiogenesis in endothelial cells. Also acts independently of the WNK1-SPAK/OSR1 kinase cascade by catalyzing phosphorylation of other substrates, such as SYT2, PCF11 and NEDD4L. Mediates phosphorylation of SYT2, regulating SYT2 association with phospholipids and membrane-binding. Regulates mRNA export in the nucleus by mediating phosphorylation of PCF11, thereby decreasing the association between PCF11 and POLR2A/RNA polymerase II and promoting mRNA export to the cytoplasm. Acts as a negative regulator of autophagy. Required for the abscission step during mitosis, independently of the WNK1-SPAK/OSR1 kinase cascade. WNK1 may also play a role in actin cytoskeletal reorganization. Also acts as a scaffold protein independently of its protein kinase activity: negatively regulates cell membrane localization of various transporters and channels, such as SLC4A4, SLC26A6, SLC26A9, TRPV4 and CFTR. Involved in the regulation of epithelial Na(+) channel (ENaC) by promoting activation of SGK1 in a kinase-independent manner. Probably activates SGK1 by acting as a scaffold protein that promotes the recruitment of SGK1 to the mTORC2 complex in response to chloride, leading to mTORC2-dependent phosphorylation and activation of SGK1. Acts as an assembly factor for the ER membrane protein complex independently of its protein kinase activity: associates with EMC2 in the cytoplasm via its amphipathic alpha-helix, and prevents EMC2 ubiquitination and subsequent degradation, thereby promoting EMC2 stabilization. Functionally, kinase-defective isoform specifically expressed in kidney, which acts as a dominant-negative regulator of the longer isoform 1. Does not directly inhibit WNK4 and has no direct effect on sodium and chloride ion transport. Down-regulates sodium-chloride cotransporter activity indirectly by inhibiting isoform 1, it associates with isoform 1 and attenuates its kinase activity. In kidney, may play an important role regulating sodium and potassium balance. Its function is as follows. Kinase-defective isoform produced by alternative promoter usage and alternative splicing. This chain is Serine/threonine-protein kinase WNK1, found in Rattus norvegicus (Rat).